The primary structure comprises 514 residues: Extracellular exo-inulinase inuE (514 aa).

Residues 1–18 (MRAFLALIFLTFVMNVES) form the signal peptide. Substrate contacts are provided by residues 33–34 (ND) and Gln-52. Asp-34 functions as the Nucleophile in the catalytic mechanism. The N-linked (GlcNAc...) asparagine glycan is linked to Asn-56. 2 residues coordinate substrate: Trp-60 and Ser-95. Residues Asn-104 and Asn-110 are each glycosylated (N-linked (GlcNAc...) asparagine). 162-163 (RD) contacts substrate. N-linked (GlcNAc...) asparagine glycans are attached at residues Asn-197 and Asn-203. Residues Glu-214 and Trp-300 each contribute to the substrate site. Glu-214 (proton donor/acceptor) is an active-site residue. N-linked (GlcNAc...) asparagine glycans are attached at residues Asn-357, Asn-371, Asn-389, and Asn-422.

The protein belongs to the glycosyl hydrolase 32 family.

The protein localises to the secreted. The catalysed reaction is Hydrolysis of terminal, non-reducing (2-&gt;1)- and (2-&gt;6)-linked beta-D-fructofuranose residues in fructans.. Functionally, exo-inulinase involved in utilization of the plant storage polymer inulin, consisting of fructooligosaccharides with a degree of polymerization (DP) value from 2 to 60. Splits off terminal fructose units successively from the non-reducing end of the inulin molecule. The protein is Extracellular exo-inulinase inuE of Meyerozyma guilliermondii (Yeast).